Consider the following 144-residue polypeptide: Phosphomevalonate dehydratase small subunit (144 aa).

S65 serves as the catalytic Proton acceptor.

It belongs to the AcnX type II small subunit family. In terms of assembly, heterodimer composed of a large subunit (PMDh-L) and a small subunit (PMDh-S).

It catalyses the reaction (R)-5-phosphomevalonate = (2E)-3-methyl-5-phosphooxypent-2-enoate + H2O. It functions in the pathway isoprenoid biosynthesis; isopentenyl diphosphate biosynthesis via mevalonate pathway. Component of a hydro-lyase that catalyzes the dehydration of mevalonate 5-phosphate (MVA5P) to form trans-anhydromevalonate 5-phosphate (tAHMP). Involved in the archaeal mevalonate (MVA) pathway, which provides fundamental precursors for isoprenoid biosynthesis, such as isopentenyl diphosphate (IPP) and dimethylallyl diphosphate (DMAPP). In Methanosarcina acetivorans (strain ATCC 35395 / DSM 2834 / JCM 12185 / C2A), this protein is Phosphomevalonate dehydratase small subunit.